Reading from the N-terminus, the 316-residue chain is Probable cell division protein WhiA (316 aa).

Positions 280–313 form a DNA-binding region, H-T-H motif; sequence SLKELGEMLEPPVGKSGVNHRLRKIEKIAEELRT.

It belongs to the WhiA family.

Its function is as follows. Involved in cell division and chromosome segregation. In Clostridium perfringens (strain ATCC 13124 / DSM 756 / JCM 1290 / NCIMB 6125 / NCTC 8237 / Type A), this protein is Probable cell division protein WhiA.